Here is a 188-residue protein sequence, read N- to C-terminus: MASYNTNDFRSGLKIMLDGEPAVITECEFVKPGKGQAFARVRLRKLISNKLLEKTFKSTDSAEGADVMDINLTYLYNDGEFWHFMNNETFEQLAADEKAVGENAKWLIDQAECIVTLWDNRPIAVVPPNFVELEIVDTDPGLKGDTAGTGGKPATLSTGAVVKVPLFVQIGEVIKVDTRSGEYVSRVK.

Lys34 is subject to N6-(3,6-diaminohexanoyl)-5-hydroxylysine.

The protein belongs to the elongation factor P family. In terms of processing, may be beta-lysylated on the epsilon-amino group of Lys-34 by the combined action of EpmA and EpmB, and then hydroxylated on the C5 position of the same residue by EpmC (if this protein is present). Lysylation is critical for the stimulatory effect of EF-P on peptide-bond formation. The lysylation moiety may extend toward the peptidyltransferase center and stabilize the terminal 3-CCA end of the tRNA. Hydroxylation of the C5 position on Lys-34 may allow additional potential stabilizing hydrogen-bond interactions with the P-tRNA.

It is found in the cytoplasm. The protein operates within protein biosynthesis; polypeptide chain elongation. Involved in peptide bond synthesis. Alleviates ribosome stalling that occurs when 3 or more consecutive Pro residues or the sequence PPG is present in a protein, possibly by augmenting the peptidyl transferase activity of the ribosome. Modification of Lys-34 is required for alleviation. The sequence is that of Elongation factor P from Proteus mirabilis (strain HI4320).